Reading from the N-terminus, the 104-residue chain is Ubiquitin-related modifier 1 homolog (104 aa).

Glycine 104 carries the 1-thioglycine modification. A Glycyl lysine isopeptide (Gly-Lys) (interchain with K-? in acceptor proteins) cross-link involves residue glycine 104.

Belongs to the URM1 family. Interacts with cer. Post-translationally, C-terminal thiocarboxylation occurs in 2 steps, it is first acyl-adenylated (-COAMP) via the hesA/moeB/thiF part of the MOCS3 homolog, then thiocarboxylated (-COSH) via the rhodanese domain of the MOCS3 homolog.

Its subcellular location is the cytoplasm. It participates in tRNA modification; 5-methoxycarbonylmethyl-2-thiouridine-tRNA biosynthesis. Functionally, acts as a sulfur carrier required for 2-thiolation of mcm(5)S(2)U at tRNA wobble positions of cytosolic tRNA(Lys), tRNA(Glu) and tRNA(Gln). Serves as sulfur donor in tRNA 2-thiolation reaction by being thiocarboxylated (-COSH) at its C-terminus by MOCS3. The sulfur is then transferred to tRNA to form 2-thiolation of mcm(5)S(2)U. Also acts as a ubiquitin-like protein (UBL) that is covalently conjugated via an isopeptide bond to lysine residues of target proteins such as Prx2/Jafrac1, Ciao1, Eip71CD and GILT1. The thiocarboxylated form serves as substrate for conjugation and oxidative stress specifically induces the formation of UBL-protein conjugates. In Drosophila grimshawi (Hawaiian fruit fly), this protein is Ubiquitin-related modifier 1 homolog.